Here is a 178-residue protein sequence, read N- to C-terminus: Caveolin-1 (178 aa).

An N-acetylserine modification is found at Ser2. Ser2 carries the phosphoserine modification. The interval 2 to 94 (SGGKYVDSEG…WKASFTTFTV (93 aa)) is required for homooligomerization. Topologically, residues 2–104 (SGGKYVDSEG…TKYWFYRLLS (103 aa)) are cytoplasmic. N6-acetyllysine; alternate is present on Lys5. Residue Lys5 forms a Glycyl lysine isopeptide (Lys-Gly) (interchain with G-Cter in ubiquitin); alternate linkage. Tyr6 carries the post-translational modification Phosphotyrosine. Ser9 carries the phosphoserine modification. Tyr14 carries the phosphotyrosine; by ABL1 modification. Residue Tyr25 is modified to Phosphotyrosine. Glycyl lysine isopeptide (Lys-Gly) (interchain with G-Cter in ubiquitin) cross-links involve residues Lys26, Lys30, Lys39, Lys47, and Lys57. The interval 82–94 (DGIWKASFTTFTV) is interaction with CAVIN3. Positions 105-125 (GIFGIPMALIWGVYFAILSFL) form an intramembrane region, helical. Over 126–178 (HIWAVVPCIKSFLIEIQCISRVYSIYVHTFCDPLFEAIGKIFSNIRISTQKEI) the chain is Cytoplasmic. The tract at residues 131–142 (VPCIKSFLIEIQ) is interacts with SPRY1, SPRY2, SPRY3 and SPRY4. S-palmitoyl cysteine attachment occurs at residues Cys133, Cys143, and Cys156. The interval 149–160 (SIYVHTFCDPLF) is interacts with SPRY1, SPRY2, and SPRY4. Residues 167-178 (FSNIRISTQKEI) are interacts with SPRY1, SPRY2, SPRY3 and SPRY4.

This sequence belongs to the caveolin family. In terms of assembly, homooligomer. Interacts with GLIPR2. Interacts with NOSTRIN. Interacts with SNAP25 and STX1A. Interacts (via the N-terminus) with DPP4; the interaction is direct. Interacts with CTNNB1, CDH1 and JUP. Interacts with PACSIN2; this interaction induces membrane tubulation. Interacts with SLC7A9. Interacts with BMX and BTK. Interacts with TGFBR1. Interacts with CAVIN3 (via leucine-zipper domain) in a cholesterol-sensitive manner. Interacts with CAVIN1. Interacts with EHD2 in a cholesterol-dependent manner. Forms a ternary complex with UBXN6 and VCP; mediates CAV1 targeting to lysosomes for degradation. Interacts with ABCG1; this interaction regulates ABCG1-mediated cholesterol efflux. Interacts with NEU3; this interaction enhances NEU3 sialidase activity within caveola. Interacts (via C-terminus) with SPRY1, SPRY2 (via C-terminus), SPRY3, and SPRY4. Interacts with IGFBP5; this interaction allows trafficking of IGFBP5 from the plasma membrane to the nucleus. Post-translationally, phosphorylated at Tyr-14 by ABL1 in response to oxidative stress. In terms of processing, ubiquitinated. Undergo monoubiquitination and multi- and/or polyubiquitination. Monoubiquitination of N-terminal lysines promotes integration in a ternary complex with UBXN6 and VCP which promotes oligomeric CAV1 targeting to lysosomes for degradation. Ubiquitinated by ZNRF1; leading to degradation and modulation of the TLR4-mediated immune response.

It is found in the golgi apparatus membrane. Its subcellular location is the cell membrane. The protein resides in the membrane. It localises to the caveola. The protein localises to the membrane raft. May act as a scaffolding protein within caveolar membranes. Forms a stable heterooligomeric complex with CAV2 that targets to lipid rafts and drives caveolae formation. Mediates the recruitment of CAVIN proteins (CAVIN1/2/3/4) to the caveolae. Interacts directly with G-protein alpha subunits and can functionally regulate their activity. Involved in the costimulatory signal essential for T-cell receptor (TCR)-mediated T-cell activation. Its binding to DPP4 induces T-cell proliferation and NF-kappa-B activation in a T-cell receptor/CD3-dependent manner. Recruits CTNNB1 to caveolar membranes and may regulate CTNNB1-mediated signaling through the Wnt pathway. Negatively regulates TGFB1-mediated activation of SMAD2/3 by mediating the internalization of TGFBR1 from membrane rafts leading to its subsequent degradation. Binds 20(S)-hydroxycholesterol (20(S)-OHC). The sequence is that of Caveolin-1 (CAV1) from Echinops telfairi (Lesser hedgehog tenrec).